Reading from the N-terminus, the 450-residue chain is ATP-dependent protease ATPase subunit HslU (450 aa).

ATP-binding positions include valine 27, 69-74 (GVGKTE), aspartate 263, glutamate 328, and arginine 400.

This sequence belongs to the ClpX chaperone family. HslU subfamily. A double ring-shaped homohexamer of HslV is capped on each side by a ring-shaped HslU homohexamer. The assembly of the HslU/HslV complex is dependent on binding of ATP.

The protein resides in the cytoplasm. Functionally, ATPase subunit of a proteasome-like degradation complex; this subunit has chaperone activity. The binding of ATP and its subsequent hydrolysis by HslU are essential for unfolding of protein substrates subsequently hydrolyzed by HslV. HslU recognizes the N-terminal part of its protein substrates and unfolds these before they are guided to HslV for hydrolysis. This Aquifex aeolicus (strain VF5) protein is ATP-dependent protease ATPase subunit HslU.